The primary structure comprises 514 residues: 2,3-bisphosphoglycerate-independent phosphoglycerate mutase (514 aa).

Mn(2+)-binding residues include D14 and S64. The active-site Phosphoserine intermediate is S64. Substrate-binding positions include H125, 155-156 (RD), R187, R193, 263-266 (RADR), and K336. Residues D403, H407, D444, H445, and H463 each coordinate Mn(2+).

This sequence belongs to the BPG-independent phosphoglycerate mutase family. In terms of assembly, monomer. Requires Mn(2+) as cofactor.

It carries out the reaction (2R)-2-phosphoglycerate = (2R)-3-phosphoglycerate. It functions in the pathway carbohydrate degradation; glycolysis; pyruvate from D-glyceraldehyde 3-phosphate: step 3/5. In terms of biological role, catalyzes the interconversion of 2-phosphoglycerate and 3-phosphoglycerate. The polypeptide is 2,3-bisphosphoglycerate-independent phosphoglycerate mutase (Shewanella baltica (strain OS185)).